A 956-amino-acid chain; its full sequence is Calsyntenin-3 (956 aa).

The N-terminal stretch at 1-19 is a signal peptide; that stretch reads MTLLLLPLLLASLLASCSC. The Extracellular segment spans residues 20–847; that stretch reads NKANKHKPWI…SHRNSMIPSA (828 aa). Cadherin domains follow at residues 29–145 and 146–246; these read IEAE…APVF and VERL…KPSW. 5 N-linked (GlcNAc...) asparagine glycosylation sites follow: Asn-299, Asn-327, Asn-347, Asn-507, and Asn-740. The chain crosses the membrane as a helical span at residues 848–868; it reads ATLIIVVCVGFLVLMVVLGLV. The Cytoplasmic segment spans residues 869-956; sequence RIHSLHRRVS…RIIETPPHRY (88 aa). Residues 917–956 form a disordered region; it reads ACVTGAVGGQQEDEDSSDSEVADSPSSDERRIIETPPHRY. Positions 927-937 are enriched in acidic residues; that stretch reads QEDEDSSDSEV. The segment covering 943–956 has biased composition (basic and acidic residues); sequence SDERRIIETPPHRY.

Belongs to the calsyntenin family. As to quaternary structure, interacts (via cadherin domains) with both alpha and beta isoforms of neurexins (NRXN1, NRXN2 and NRXN3). Directly interacts with APBA2. Forms a tripartite complex with APBA2 and APP. Interacts with low affinity with KLC1. Interacts with SLC23A2/SVCT2. In terms of processing, proteolytically processed under normal cellular conditions. A primary zeta-cleavage generates a large extracellular (soluble) N-terminal domain (sAlc) and a short C-terminal transmembrane fragment (CTF1). A secondary cleavage catalyzed by gamma-secretase within the transmembrane domain releases the beta-Alc-beta chain in the extracellular milieu and produces an intracellular fragment (AlcICD). This processing is strongly suppressed in the tripartite complex formed with APBA2 and APP, which seems to prevent the association with gamma-secretase.

The protein resides in the postsynaptic cell membrane. It is found in the endoplasmic reticulum membrane. The protein localises to the golgi apparatus membrane. It localises to the cell projection. Its subcellular location is the dendrite. Postsynaptic adhesion molecule that binds to presynaptic neurexins to mediate both excitatory and inhibitory synapse formation. Promotes synapse development by acting as a cell adhesion molecule at the postsynaptic membrane, which associates with both neurexin-alpha and neurexin-beta proteins at the presynaptic membrane. Regulates the balance between excitatory and inhibitory synapses by inhibiting formation of excitatory parallel-fiber synapses and promoting formation of inhibitory synapses in the same neuron. May also be involved in ascorbate (vitamin C) uptake via its interaction with SLC23A2/SVCT2. Complex formation with APBA2 and APP, stabilizes APP metabolism and enhances APBA2-mediated suppression of beta-APP40 secretion, due to the retardation of intracellular APP maturation. The sequence is that of Calsyntenin-3 (CLSTN3) from Pongo abelii (Sumatran orangutan).